The primary structure comprises 617 residues: MKMTLPFKPHVLALICSAGLCAASTGLYIKSRTVEAPVEPQSTQLAVSDAAAVTFPATVSAPPVTPAVVKSAFSTAQIDQWVAPVALYPDALLSQVLMASTYPTNVAQAVQWSHDNPLKQGDAAIQAVSDQPWDASVKSLVAFPQLMALMGENPQWVQNLGDAFLAQPQDVMDSVQRLRQLAQQTGSLKSSTEQKVITTTKKAVPVKQTVTAPVIPSNTVLTANPVITEPATTVISIEPANPDVVYIPNYNPTVVYGNWANTAYPPVYLPPPAGEPFVDSFVRGFGYSMGVATTYALFSSIDWDDDDHDHHHHDNDDYHHHDGGHRDGNGWQHNGDNINIDVNNFNRITGEHLTDKNMAWRHNPNYRNGVPYHDQDMAKRFHQTDVNGGMSATQLPAPTRDSQRQAAANQFQQRTHAAPVITRDTQRQAAAQRFNEAEHYGSYDDFHDFSRRQPLTQQQKDAARQRYQSASPEQRQAVRERMQTNPKIQQRREAARERIQSASPEQRQAVREKMQTNPQNQQRRDAARERIQSASPEQRQVFKEKVQQRPLNQQQRDNARQRVQSASPEQRQVFREKVQESRPQRLNDSNHTVRLNNEQRSAVCERLSERGARRLER.

Over residues 387–396 the composition is skewed to polar residues; it reads NGGMSATQLP. Disordered stretches follow at residues 387 to 419 and 443 to 599; these read NGGM…HAAP and YDDF…NNEQ. The span at 404–414 shows a compositional bias: low complexity; that stretch reads RQAAANQFQQR. Residues 453–474 are compositionally biased toward polar residues; sequence QPLTQQQKDAARQRYQSASPEQ. Basic and acidic residues-rich tracts occupy residues 490-499 and 522-531; these read QRREAARERI and QRRDAARERI. Residues 549 to 570 show a composition bias toward polar residues; the sequence is RPLNQQQRDNARQRVQSASPEQ. The segment covering 572–585 has biased composition (basic and acidic residues); that stretch reads QVFREKVQESRPQR. Over residues 586-599 the composition is skewed to polar residues; the sequence is LNDSNHTVRLNNEQ.

This is an uncharacterized protein from Escherichia coli (strain K12).